A 290-amino-acid polypeptide reads, in one-letter code: Protease HtpX homolog (290 aa).

2 helical membrane-spanning segments follow: residues 5-27 (MWLR…GYLF) and 32-51 (VAFI…YWYS). Histidine 133 lines the Zn(2+) pocket. Glutamate 134 is an active-site residue. Histidine 137 contacts Zn(2+). Transmembrane regions (helical) follow at residues 143 to 163 (ILIG…AYWA) and 182 to 202 (IIGA…IQAA). A Zn(2+)-binding site is contributed by glutamate 208.

The protein belongs to the peptidase M48B family. Zn(2+) serves as cofactor.

The protein localises to the cell membrane. In Thermococcus kodakarensis (strain ATCC BAA-918 / JCM 12380 / KOD1) (Pyrococcus kodakaraensis (strain KOD1)), this protein is Protease HtpX homolog.